Consider the following 366-residue polypeptide: Aminomethyltransferase (366 aa).

The protein belongs to the GcvT family. The glycine cleavage system is composed of four proteins: P, T, L and H.

The catalysed reaction is N(6)-[(R)-S(8)-aminomethyldihydrolipoyl]-L-lysyl-[protein] + (6S)-5,6,7,8-tetrahydrofolate = N(6)-[(R)-dihydrolipoyl]-L-lysyl-[protein] + (6R)-5,10-methylene-5,6,7,8-tetrahydrofolate + NH4(+). Its function is as follows. The glycine cleavage system catalyzes the degradation of glycine. In Neisseria meningitidis serogroup A / serotype 4A (strain DSM 15465 / Z2491), this protein is Aminomethyltransferase.